The primary structure comprises 195 residues: Imidazoleglycerol-phosphate dehydratase (195 aa).

The protein belongs to the imidazoleglycerol-phosphate dehydratase family.

It localises to the cytoplasm. It carries out the reaction D-erythro-1-(imidazol-4-yl)glycerol 3-phosphate = 3-(imidazol-4-yl)-2-oxopropyl phosphate + H2O. The protein operates within amino-acid biosynthesis; L-histidine biosynthesis; L-histidine from 5-phospho-alpha-D-ribose 1-diphosphate: step 6/9. This chain is Imidazoleglycerol-phosphate dehydratase, found in Burkholderia cenocepacia (strain HI2424).